A 1056-amino-acid chain; its full sequence is Carbamoyl phosphate synthase large chain (1056 aa).

The tract at residues 1 to 399 (MKIDVSKVIV…AFQKAIRMLD (399 aa)) is carboxyphosphate synthetic domain. Residues Arg-127, Arg-167, Gly-173, Gly-174, Lys-206, Leu-208, Glu-213, Gly-239, Val-240, His-241, Gln-282, and Glu-296 each coordinate ATP. The region spanning 131–325 (QKTMKKVGLP…LAYIATKLAI (195 aa)) is the ATP-grasp 1 domain. The Mg(2+) site is built by Gln-282, Glu-296, and Asn-298. Gln-282, Glu-296, and Asn-298 together coordinate Mn(2+). The interval 400–536 (IGDELIGKYY…VTYDGVENDI (137 aa)) is oligomerization domain. The interval 537–919 (PKPKKPSILV…LKSWLSVKPN (383 aa)) is carbamoyl phosphate synthetic domain. In terms of domain architecture, ATP-grasp 2 spans 661 to 849 (SKLLEKLGIP…LMELSAQAVL (189 aa)). Arg-697, Lys-736, Ile-738, Glu-742, Gly-766, Val-767, His-768, Ser-769, Gln-809, and Glu-820 together coordinate ATP. Positions 809, 820, and 822 each coordinate Mg(2+). Residues Gln-809, Glu-820, and Asn-822 each contribute to the Mn(2+) site. Residues 915–1043 (SVKPNELPKT…REYWIRKIEE (129 aa)) enclose the MGS-like domain. The segment at 920 to 1056 (ELPKTSALIY…EYAASVVLRR (137 aa)) is allosteric domain.

It belongs to the CarB family. In terms of assembly, composed of two chains; the small (or glutamine) chain promotes the hydrolysis of glutamine to ammonia, which is used by the large (or ammonia) chain to synthesize carbamoyl phosphate. Tetramer of heterodimers (alpha,beta)4. The cofactor is Mg(2+). It depends on Mn(2+) as a cofactor.

It carries out the reaction hydrogencarbonate + L-glutamine + 2 ATP + H2O = carbamoyl phosphate + L-glutamate + 2 ADP + phosphate + 2 H(+). The enzyme catalyses hydrogencarbonate + NH4(+) + 2 ATP = carbamoyl phosphate + 2 ADP + phosphate + 2 H(+). It participates in amino-acid biosynthesis; L-arginine biosynthesis; carbamoyl phosphate from bicarbonate: step 1/1. Its pathway is pyrimidine metabolism; UMP biosynthesis via de novo pathway; (S)-dihydroorotate from bicarbonate: step 1/3. Its function is as follows. Large subunit of the glutamine-dependent carbamoyl phosphate synthetase (CPSase). CPSase catalyzes the formation of carbamoyl phosphate from the ammonia moiety of glutamine, carbonate, and phosphate donated by ATP, constituting the first step of 2 biosynthetic pathways, one leading to arginine and/or urea and the other to pyrimidine nucleotides. The large subunit (synthetase) binds the substrates ammonia (free or transferred from glutamine from the small subunit), hydrogencarbonate and ATP and carries out an ATP-coupled ligase reaction, activating hydrogencarbonate by forming carboxy phosphate which reacts with ammonia to form carbamoyl phosphate. The protein is Carbamoyl phosphate synthase large chain of Pyrococcus furiosus (strain ATCC 43587 / DSM 3638 / JCM 8422 / Vc1).